The sequence spans 685 residues: E3 ubiquitin-protein ligase RNF6 (685 aa).

Composition is skewed to basic and acidic residues over residues 1–10 (MNQSRSRSDG), 17–29 (PQDH…ERRW), and 88–107 (DLRD…SSHE). Disordered regions lie at residues 1–29 (MNQS…ERRW), 81–107 (EQLA…SSHE), 121–142 (GNAT…RTNP), 168–273 (DYTD…REGQ), 286–345 (RSNV…RRRG), and 499–576 (EADS…NPNN). Composition is skewed to polar residues over residues 199-213 (SQTS…SNIP), 250-264 (ASRT…QSGG), and 286-297 (RSNVTVRNTNQR). The segment covering 303–313 (LRSTSNSRSRS) has biased composition (low complexity). Composition is skewed to polar residues over residues 314-325 (PIQRQSGTVYHN) and 519-528 (ELSNLGTDNN). The RING-type zinc finger occupies 632 to 673 (CSVCISDYVTGNKLRQLPCMHEFHIHCIDRWLSENCTCPICR).

It belongs to the RNF12 family. In terms of tissue distribution, weakly expressed in peripheral blood, spleen, prostate, testis and ovary. According to a report, it is preferentially expressed in testis and ovary and hardly detected in other tissues.

The protein resides in the nucleus. Its subcellular location is the cytoplasm. It localises to the cell projection. The protein localises to the axon. It is found in the PML body. It carries out the reaction S-ubiquitinyl-[E2 ubiquitin-conjugating enzyme]-L-cysteine + [acceptor protein]-L-lysine = [E2 ubiquitin-conjugating enzyme]-L-cysteine + N(6)-ubiquitinyl-[acceptor protein]-L-lysine.. It functions in the pathway protein modification; protein ubiquitination. Functionally, E3 ubiquitin-protein ligase mediating 'Lys-48'-linked polyubiquitination of LIMK1 and its subsequent targeting to the proteasome for degradation. Negatively regulates axonal outgrowth through regulation of the LIMK1 turnover. Mediates 'Lys-6' and 'Lys-27'-linked polyubiquitination of AR/androgen receptor thereby modulating its transcriptional activity. May also bind DNA and function as a transcriptional regulator. Mediates polyubiquitination of QKI in macrophages, leading to its degradation. The sequence is that of E3 ubiquitin-protein ligase RNF6 from Homo sapiens (Human).